We begin with the raw amino-acid sequence, 567 residues long: ETHYLENE INSENSITIVE 3-like 3 protein (567 aa).

A coiled-coil region spans residues 24-44; that stretch reads NVAEIDVSDEEIDADDLERRM. Disordered stretches follow at residues 55–81 and 286–393; these read KERQ…AQRK and IQQP…RNIL. The span at 69–79 shows a compositional bias: basic and acidic residues; the sequence is ETPKKISDQAQ. A DNA-binding region spans residues 162–288; the sequence is SQFVLQDLQD…LNQEESLIQQ (127 aa). The span at 286 to 299 shows a compositional bias: polar residues; that stretch reads IQQPSSDNGNSNVT. Residues 300 to 312 are compositionally biased toward basic and acidic residues; that stretch reads ETHRRGNNADRRK. The segment covering 363–372 has biased composition (basic residues); it reads KHRRRKRPRI.

The protein belongs to the EIN3 family. In terms of assembly, interacts with MYB72.

It is found in the nucleus. Probable transcription factor that may be involved in the ethylene response pathway. The polypeptide is ETHYLENE INSENSITIVE 3-like 3 protein (EIL3) (Arabidopsis thaliana (Mouse-ear cress)).